The sequence spans 230 residues: Flavin-dependent thymidylate synthase (230 aa).

Residues Met-1 to Phe-217 form the ThyX domain. FAD-binding positions include Ser-55, Arg-78–Arg-80, and Glu-86. DUMP is bound by residues Gln-75–Arg-78, Glu-86–Arg-90, and Arg-156. Residues Arg-78–Ser-88 carry the ThyX motif motif. Residues Asn-172 to Arg-174 and Asn-178 each bind FAD. Arg-183 contacts dUMP. The active-site Involved in ionization of N3 of dUMP, leading to its activation is Arg-183.

It belongs to the thymidylate synthase ThyX family. As to quaternary structure, homotetramer. Requires FAD as cofactor.

The enzyme catalyses dUMP + (6R)-5,10-methylene-5,6,7,8-tetrahydrofolate + NADPH + H(+) = dTMP + (6S)-5,6,7,8-tetrahydrofolate + NADP(+). The protein operates within pyrimidine metabolism; dTTP biosynthesis. Functionally, catalyzes the reductive methylation of 2'-deoxyuridine-5'-monophosphate (dUMP) to 2'-deoxythymidine-5'-monophosphate (dTMP) while utilizing 5,10-methylenetetrahydrofolate (mTHF) as the methyl donor, and NADPH and FADH(2) as the reductant. This chain is Flavin-dependent thymidylate synthase, found in Kosmotoga olearia (strain ATCC BAA-1733 / DSM 21960 / TBF 19.5.1).